A 448-amino-acid polypeptide reads, in one-letter code: Ribosomal protein uS12 methylthiotransferase RimO (448 aa).

One can recognise an MTTase N-terminal domain in the interval 10-120 (PNIGFVSLGC…VMEHVHKYVP (111 aa)). 6 residues coordinate [4Fe-4S] cluster: Cys19, Cys55, Cys84, Cys152, Cys156, and Cys159. The Radical SAM core domain maps to 138–379 (LTPKHYAYLK…MELQQQISAQ (242 aa)). The TRAM domain occupies 382–448 (QQKIGKTLPV…ADEYDLWGTC (67 aa)).

It belongs to the methylthiotransferase family. RimO subfamily. [4Fe-4S] cluster is required as a cofactor.

The protein resides in the cytoplasm. It catalyses the reaction L-aspartate(89)-[ribosomal protein uS12]-hydrogen + (sulfur carrier)-SH + AH2 + 2 S-adenosyl-L-methionine = 3-methylsulfanyl-L-aspartate(89)-[ribosomal protein uS12]-hydrogen + (sulfur carrier)-H + 5'-deoxyadenosine + L-methionine + A + S-adenosyl-L-homocysteine + 2 H(+). Catalyzes the methylthiolation of an aspartic acid residue of ribosomal protein uS12. The protein is Ribosomal protein uS12 methylthiotransferase RimO of Mannheimia succiniciproducens (strain KCTC 0769BP / MBEL55E).